The following is a 1029-amino-acid chain: Exportin-T (1029 aa).

Belongs to the exportin family.

It is found in the nucleus. It localises to the cytoplasm. Its function is as follows. tRNA nucleus export receptor which facilitates tRNA translocation across the nuclear pore complex. Involved in pre-tRNA splicing, probably by affecting the interaction of pre-tRNA with splicing endonuclease. The sequence is that of Exportin-T (los1) from Aspergillus clavatus (strain ATCC 1007 / CBS 513.65 / DSM 816 / NCTC 3887 / NRRL 1 / QM 1276 / 107).